The sequence spans 360 residues: MSLIRLNIDSFRNIQLAQLSPSSGINLIYGQNGSGKTSILEAIYFLGMGRSFRSHLSQRVINNEQDKLTLFATLNLPRGDSKIGLRRFRSGETEVKIDGEKVKRLSTLAETLPIQVITPESFSLLFEGPKSRRQFIDWGAFHSDPQFYAAWVNVRRVLKQRNQLLRNNSSYEQIQYWDREFVRYTEQVTEIRNRYVDSLNELLKGIIGEFLPQVDVKVSFTRGWDSKTDFAQLLESQYPRDLATGHTVSGPHKADLRLRVGSLPAQDALSRGQLKLLVCALRIAQGKLLKQQIDKHSIYLVDDLPSELDAQHRQLLLKQLVDTGAQVFVTAIEPAAIVDSLHTPPSRMFHVEQGRVTVIE.

ATP is bound at residue 30–37; it reads GQNGSGKT.

Belongs to the RecF family.

The protein localises to the cytoplasm. Functionally, the RecF protein is involved in DNA metabolism; it is required for DNA replication and normal SOS inducibility. RecF binds preferentially to single-stranded, linear DNA. It also seems to bind ATP. The polypeptide is DNA replication and repair protein RecF (Shewanella sp. (strain MR-7)).